The chain runs to 339 residues: Acyl-CoA dehydrogenase FadE28 (339 aa).

Residues arginine 227, glutamine 238, histidine 295, and glycine 299 each coordinate FAD.

This sequence belongs to the acyl-CoA dehydrogenase family. As to quaternary structure, heterotetramer composed of FadE28 and FadE29. The cofactor is FAD.

The enzyme catalyses 3-oxochol-4-en-22-oyl-CoA + A = 3-oxochola-4,17-dien-22-oyl-CoA + AH2. It functions in the pathway steroid metabolism; cholesterol degradation. In terms of biological role, involved in the third cycle of side chain dehydrogenation in the beta-oxidation of cholesterol catabolism. May play an important role for the initial macrophage invasion, possibly in response to the acidification of phagosome. It contributes partly to the virulence by increasing the efficiency of beta-oxidation. Catalyzes the dehydrogenation of 2'-propanoyl-CoA ester side chains of 3-oxo-4-pregnene-20-carboxyl-CoA (3-OPC-CoA) to yield 3-oxo-4,17-pregnadiene-20-carboxyl-CoA (3-OPDC-CoA). Also able to dehydrogenate steroyl-CoA such as 3-oxo-chol-4-en-24-oyl-CoA (3-OCO-CoA), 1beta-(2'-propanoyl-CoA)-3a-alpha-H-7a-beta-methylhexahydro-4-indanone (indanone-CoA ester), hexahydroindanone and pregenenone. The protein is Acyl-CoA dehydrogenase FadE28 (fadE28) of Mycobacterium tuberculosis (strain ATCC 25618 / H37Rv).